A 349-amino-acid chain; its full sequence is 4-hydroxy-tetrahydrodipicolinate reductase 2, chloroplastic (349 aa).

Residues methionine 1–valine 53 constitute a chloroplast transit peptide. Residues glycine 81 to methionine 86, glycine 173 to threonine 175, and serine 196 to methionine 199 each bind NAD(+). The active-site Proton donor/acceptor is the histidine 232. The active-site Proton donor is lysine 236. Position 241–242 (glycine 241–threonine 242) interacts with (S)-2,3,4,5-tetrahydrodipicolinate.

It belongs to the DapB family.

The protein resides in the plastid. The protein localises to the chloroplast. The catalysed reaction is (S)-2,3,4,5-tetrahydrodipicolinate + NAD(+) + H2O = (2S,4S)-4-hydroxy-2,3,4,5-tetrahydrodipicolinate + NADH + H(+). It catalyses the reaction (S)-2,3,4,5-tetrahydrodipicolinate + NADP(+) + H2O = (2S,4S)-4-hydroxy-2,3,4,5-tetrahydrodipicolinate + NADPH + H(+). It participates in amino-acid biosynthesis; L-lysine biosynthesis via DAP pathway; (S)-tetrahydrodipicolinate from L-aspartate: step 4/4. Its function is as follows. Catalyzes the conversion of 4-hydroxy-tetrahydrodipicolinate (HTPA) to tetrahydrodipicolinate. The chain is 4-hydroxy-tetrahydrodipicolinate reductase 2, chloroplastic (DAPB2) from Arabidopsis thaliana (Mouse-ear cress).